A 326-amino-acid polypeptide reads, in one-letter code: 3-methyl-2-oxobutanoate hydroxymethyltransferase 1 (326 aa).

Mg(2+) is bound by residues aspartate 52, aspartate 91, and glutamate 122. Residues 52-53 (DS) and aspartate 91 contribute to the 3-methyl-2-oxobutanoate site. The active-site Proton acceptor is the glutamate 189.

Belongs to the PanB family. As to quaternary structure, homodecamer; pentamer of dimers. The cofactor is Mg(2+).

The protein resides in the cytoplasm. It carries out the reaction 3-methyl-2-oxobutanoate + (6R)-5,10-methylene-5,6,7,8-tetrahydrofolate + H2O = 2-dehydropantoate + (6S)-5,6,7,8-tetrahydrofolate. Its pathway is cofactor biosynthesis; (R)-pantothenate biosynthesis; (R)-pantoate from 3-methyl-2-oxobutanoate: step 1/2. Catalyzes the reversible reaction in which hydroxymethyl group from 5,10-methylenetetrahydrofolate is transferred onto alpha-ketoisovalerate to form ketopantoate. This chain is 3-methyl-2-oxobutanoate hydroxymethyltransferase 1, found in Bradyrhizobium diazoefficiens (strain JCM 10833 / BCRC 13528 / IAM 13628 / NBRC 14792 / USDA 110).